Reading from the N-terminus, the 67-residue chain is Probable Sec-independent protein translocase protein TatE (67 aa).

Residues I4–G21 form a helical membrane-spanning segment. The disordered stretch occupies residues N44 to E67.

It belongs to the TatA/E family. TatE subfamily.

The protein localises to the cell inner membrane. Its function is as follows. Part of the twin-arginine translocation (Tat) system that transports large folded proteins containing a characteristic twin-arginine motif in their signal peptide across membranes. TatE shares overlapping functions with TatA. In Cronobacter sakazakii (strain ATCC BAA-894) (Enterobacter sakazakii), this protein is Probable Sec-independent protein translocase protein TatE.